A 468-amino-acid polypeptide reads, in one-letter code: 6-phosphogluconate dehydrogenase, decarboxylating (468 aa).

Residues 10 to 15 (GMAVMG), 33 to 35 (NRS), 74 to 76 (VKA), and N102 each bind NADP(+). Residues N102 and 128–130 (SGG) each bind substrate. K183 functions as the Proton acceptor in the catalytic mechanism. Position 186–187 (186–187 (HN)) interacts with substrate. E190 acts as the Proton donor in catalysis. Residues Y191, K260, R287, R445, and H451 each coordinate substrate.

The protein belongs to the 6-phosphogluconate dehydrogenase family. Homodimer.

The catalysed reaction is 6-phospho-D-gluconate + NADP(+) = D-ribulose 5-phosphate + CO2 + NADPH. Its pathway is carbohydrate degradation; pentose phosphate pathway; D-ribulose 5-phosphate from D-glucose 6-phosphate (oxidative stage): step 3/3. Its function is as follows. Catalyzes the oxidative decarboxylation of 6-phosphogluconate to ribulose 5-phosphate and CO(2), with concomitant reduction of NADP to NADPH. This is 6-phosphogluconate dehydrogenase, decarboxylating (gnd) from Shigella flexneri.